We begin with the raw amino-acid sequence, 490 residues long: Cytochrome P450 monooxygenase anuE (490 aa).

C405 serves as a coordination point for heme.

This sequence belongs to the cytochrome P450 family. Heme is required as a cofactor.

It catalyses the reaction 2-hydroxymethyl-3-pentylphenol + reduced [NADPH--hemoprotein reductase] + O2 = (8S)-annullatin E + oxidized [NADPH--hemoprotein reductase] + H2O + H(+). Its pathway is secondary metabolite biosynthesis. Functionally, cytochrome P450 monooxygenase; part of the gene cluster that mediates the biosynthesis of annullatin D, an alkylated aromatic polyketide with a fused dihydrobenzofuran lactone ring system that exhibits potent agonistic activities toward the cannabinoid receptors. Within the pathway, anuE catalyzes the hydroxylation of 2-hydroxymethyl-3-pentylphenol at the side chain to produce (8S)-annullatin E. The annullatin backbone 2-hydroxymethyl-3-pentylphenol is assembled from one acetyl-CoA starter unit and 5 malonyl-CoA elongation units by cooperation of the highly reducing polyketide synthase anuA, the short-chain dehydrogenase anuB and the oxidoreductase anuC, before being hydroxylated at the C-5 alkyl chain by the cytochrome P450 monooxygenase anuE to form (8S)-annullatin E. The prenyltransferase anuH subsequently installs one isoprenyl group at the benzene ring to form (8S)-annullatin J. Enzymatic or nonenzymatic dihydro-benzofuran ring formation between the prenyl and the phenolic hydroxyl groups in (8S)-annullatin J results in two diastereomers (2S,9S)-annullatin H and compound 12. The intermediate (2S,9S)-annullatin H is then converted to (2S,9S)-annullatin D by the FAD-linked oxidoreductase anuG-catalyzed five-member lactone ring formation. The isomer 12 acts as a substrate for the short-chain dehydrogenase anuF and is oxidized to (2R)-annullatin F, which is subsequently acetylated by an acetyltransferase leading to (2R)-annullatin G formation. The remaining enzymes identified within the cluster, anuD, anuI and anuJ, seem not to be involved in annullatin biosynthesis. The polypeptide is Cytochrome P450 monooxygenase anuE (Penicillium roqueforti (strain FM164)).